Consider the following 148-residue polypeptide: Lipoprotein MlpH (148 aa).

The first 17 residues, 1–17 (MKIINILFCLFLLMLNG), serve as a signal peptide directing secretion. Cysteine 18 carries N-palmitoyl cysteine lipidation. The S-diacylglycerol cysteine moiety is linked to residue cysteine 18. The tract at residues 26 to 61 (LKNNAQQTKSRRKRDLTQKEVTQEKPKSKEELLREK) is disordered. The span at 40 to 61 (DLTQKEVTQEKPKSKEELLREK) shows a compositional bias: basic and acidic residues.

This sequence belongs to the Multicopy lipoprotein (Mlp) family.

It is found in the cell outer membrane. In terms of biological role, an outer membrane protein that may participate in pathogenesis. Some human Lyme disease patients have antibodies against this protein. The Mlp proteins probably undergo intragenic recombination, generating new alleles. The chain is Lipoprotein MlpH from Borreliella burgdorferi (strain ATCC 35210 / DSM 4680 / CIP 102532 / B31) (Borrelia burgdorferi).